Reading from the N-terminus, the 444-residue chain is Deoxyguanosinetriphosphate triphosphohydrolase-like protein (444 aa).

The disordered stretch occupies residues 1 to 26; sequence MTESLWHERRLTEEKKRRNDHRSPYQ. The HD domain maps to 59–250; the sequence is RLTHSLEVSQ…MELADDIAYA (192 aa).

It belongs to the dGTPase family. Type 2 subfamily.

This Shewanella sediminis (strain HAW-EB3) protein is Deoxyguanosinetriphosphate triphosphohydrolase-like protein.